The primary structure comprises 655 residues: p-hydroxybenzoic acid efflux pump subunit AaeB (655 aa).

Helical transmembrane passes span 13–33, 38–58, 69–89, 93–113, 121–141, 152–172, 370–390, 407–427, 431–451, 459–479, and 482–502; these read FAVK…HFQL, WAVL…GGEP, LRII…ISMI, LLMI…SSLV, WGLS…EPLL, EIVI…PRSI, LFWL…IAVV, FIYG…VIIP, QSML…GIEV, MGAL…TFHF, and FLDS…VILL.

It belongs to the aromatic acid exporter ArAE (TC 2.A.85) family.

Its subcellular location is the cell inner membrane. Its function is as follows. Forms an efflux pump with AaeA. Could function as a metabolic relief valve, allowing to eliminate certain compounds when they accumulate to high levels in the cell. The protein is p-hydroxybenzoic acid efflux pump subunit AaeB of Salmonella enteritidis PT4 (strain P125109).